A 257-amino-acid polypeptide reads, in one-letter code: Enolase-phosphatase E1 (257 aa).

2 residues coordinate Mg(2+): D16 and E18. Substrate-binding positions include 150 to 151 and K184; that span reads SS. D209 is a Mg(2+) binding site.

This sequence belongs to the HAD-like hydrolase superfamily. MasA/MtnC family. Monomer. Mg(2+) serves as cofactor.

The protein localises to the cytoplasm. It localises to the nucleus. It carries out the reaction 5-methylsulfanyl-2,3-dioxopentyl phosphate + H2O = 1,2-dihydroxy-5-(methylsulfanyl)pent-1-en-3-one + phosphate. It functions in the pathway amino-acid biosynthesis; L-methionine biosynthesis via salvage pathway; L-methionine from S-methyl-5-thio-alpha-D-ribose 1-phosphate: step 3/6. The protein operates within amino-acid biosynthesis; L-methionine biosynthesis via salvage pathway; L-methionine from S-methyl-5-thio-alpha-D-ribose 1-phosphate: step 4/6. Bifunctional enzyme that catalyzes the enolization of 2,3-diketo-5-methylthiopentyl-1-phosphate (DK-MTP-1-P) into the intermediate 2-hydroxy-3-keto-5-methylthiopentenyl-1-phosphate (HK-MTPenyl-1-P), which is then dephosphorylated to form the acireductone 1,2-dihydroxy-3-keto-5-methylthiopentene (DHK-MTPene). This chain is Enolase-phosphatase E1 (Enoph1), found in Mus musculus (Mouse).